A 218-amino-acid polypeptide reads, in one-letter code: Small ribosomal subunit protein uS3 (218 aa).

One can recognise a KH type-2 domain in the interval 38-107 (VREYIEKRLK…RVHVNVVEVK (70 aa)).

The protein belongs to the universal ribosomal protein uS3 family. In terms of assembly, part of the 30S ribosomal subunit. Forms a tight complex with proteins S10 and S14.

In terms of biological role, binds the lower part of the 30S subunit head. Binds mRNA in the 70S ribosome, positioning it for translation. This chain is Small ribosomal subunit protein uS3, found in Exiguobacterium sibiricum (strain DSM 17290 / CCUG 55495 / CIP 109462 / JCM 13490 / 255-15).